The primary structure comprises 84 residues: Small ribosomal subunit protein bS20 (84 aa).

It belongs to the bacterial ribosomal protein bS20 family.

Its function is as follows. Binds directly to 16S ribosomal RNA. The sequence is that of Small ribosomal subunit protein bS20 from Lactiplantibacillus plantarum (strain ATCC BAA-793 / NCIMB 8826 / WCFS1) (Lactobacillus plantarum).